The sequence spans 338 residues: Ketol-acid reductoisomerase (NADP(+)) (338 aa).

Residues M1 to T181 enclose the KARI N-terminal Rossmann domain. Residues Y24 to Q27, R47, S50, S52, and D82 to Q85 each bind NADP(+). Residue H107 is part of the active site. Residue G133 participates in NADP(+) binding. The 146-residue stretch at N182 to I327 folds into the KARI C-terminal knotted domain. Residues D190, E194, E226, and E230 each contribute to the Mg(2+) site. S251 is a substrate binding site.

Belongs to the ketol-acid reductoisomerase family. It depends on Mg(2+) as a cofactor.

The catalysed reaction is (2R)-2,3-dihydroxy-3-methylbutanoate + NADP(+) = (2S)-2-acetolactate + NADPH + H(+). It catalyses the reaction (2R,3R)-2,3-dihydroxy-3-methylpentanoate + NADP(+) = (S)-2-ethyl-2-hydroxy-3-oxobutanoate + NADPH + H(+). Its pathway is amino-acid biosynthesis; L-isoleucine biosynthesis; L-isoleucine from 2-oxobutanoate: step 2/4. It participates in amino-acid biosynthesis; L-valine biosynthesis; L-valine from pyruvate: step 2/4. Functionally, involved in the biosynthesis of branched-chain amino acids (BCAA). Catalyzes an alkyl-migration followed by a ketol-acid reduction of (S)-2-acetolactate (S2AL) to yield (R)-2,3-dihydroxy-isovalerate. In the isomerase reaction, S2AL is rearranged via a Mg-dependent methyl migration to produce 3-hydroxy-3-methyl-2-ketobutyrate (HMKB). In the reductase reaction, this 2-ketoacid undergoes a metal-dependent reduction by NADPH to yield (R)-2,3-dihydroxy-isovalerate. In Pelobacter propionicus (strain DSM 2379 / NBRC 103807 / OttBd1), this protein is Ketol-acid reductoisomerase (NADP(+)).